A 534-amino-acid chain; its full sequence is Glucans biosynthesis protein D (534 aa).

A signal peptide (tat-type signal) is located at residues 1-26; the sequence is MQRRDFIRNASLALAAFGLPSLPACA.

It belongs to the OpgD/OpgG family. Post-translationally, predicted to be exported by the Tat system. The position of the signal peptide cleavage has not been experimentally proven.

It is found in the periplasm. Its pathway is glycan metabolism; osmoregulated periplasmic glucan (OPG) biosynthesis. Its function is as follows. Probably involved in the control of the structural glucose backbone of osmoregulated periplasmic glucans (OPGs). The protein is Glucans biosynthesis protein D of Stenotrophomonas maltophilia (strain R551-3).